A 153-amino-acid polypeptide reads, in one-letter code: UPF0251 protein Daud_0090 (153 aa).

Residues 129–138 (ELMTRPERCS) are compositionally biased toward basic and acidic residues. The tract at residues 129–153 (ELMTRPERCSRPKRGAGKYRVPKKR) is disordered. Residues 139 to 153 (RPKRGAGKYRVPKKR) are compositionally biased toward basic residues.

Belongs to the UPF0251 family.

This Desulforudis audaxviator (strain MP104C) protein is UPF0251 protein Daud_0090.